Reading from the N-terminus, the 216-residue chain is UPF0502 protein VCM66_A0698 (216 aa).

Belongs to the UPF0502 family.

The polypeptide is UPF0502 protein VCM66_A0698 (Vibrio cholerae serotype O1 (strain M66-2)).